A 446-amino-acid polypeptide reads, in one-letter code: Hepatocyte nuclear factor 4-beta (446 aa).

The nuclear receptor DNA-binding region spans 47-122 (NSFCAICGDR…AGMKKEAVQN (76 aa)). 2 NR C4-type zinc fingers span residues 50 to 70 (CAICGDRATGKHYGASSCDGC) and 86 to 110 (CRFSRQCIVDKDKRNQCRYCRLRKC). The 230-residue stretch at 137 to 366 (NGSLSINVLT…SLLQELLLGG (230 aa)) folds into the NR LBD domain.

This sequence belongs to the nuclear hormone receptor family. NR2 subfamily. In terms of assembly, homodimerization is required for HNF4-alpha to bind to its recognition site. In terms of tissue distribution, expressed in liver, kidney, stomach, intestine, lung, ovary, and testis. Not expressed in fat, muscle and brain.

It is found in the nucleus. Functionally, transcription factor; binds and activates the promoter for the HNF1-alpha gene. Seems to have a lower DNA binding activity than HNF4-alpha and is a weaker transactivator than the alpha isoform. The sequence is that of Hepatocyte nuclear factor 4-beta (hnf4b) from Xenopus laevis (African clawed frog).